The primary structure comprises 447 residues: Drebrin-like protein A (447 aa).

One can recognise an ADF-H domain in the interval 2 to 133 (SVNLSKNGAA…EPESIMEKVA (132 aa)). Disordered stretches follow at residues 141–160 (NFHK…VGSV) and 184–368 (KDEE…TENQ). The stretch at 180–245 (AKAEKDEEER…EQEETEKQQT (66 aa)) forms a coiled coil. The segment covering 184-242 (KDEEERRMEENRRANSEKDRLERERKEREQREAETREQRFRERAKEIDAQRKEQEETEK) has biased composition (basic and acidic residues). A compositionally biased stretch (polar residues) spans 246–255 (VPASQRSVNP). Over residues 319-328 (PESPVPPVSH) the composition is skewed to pro residues. Acidic residues predominate over residues 345 to 365 (QEEENIYQDATEDQNIYEDTT). One can recognise an SH3 domain in the interval 388–447 (EKGVCARALYDYQAADDTEISFDPDDLITQIQFIDEGWWRGFSPAGHFGMFPANYVELLE).

This sequence belongs to the ABP1 family.

It is found in the cytoplasm. Its subcellular location is the cytoskeleton. The protein resides in the cell projection. It localises to the lamellipodium. The protein localises to the ruffle. It is found in the cell cortex. Its subcellular location is the cytosol. The protein resides in the synapse. It localises to the perikaryon. The protein localises to the neuron projection. It is found in the cell membrane. Its subcellular location is the cytoplasmic vesicle. The protein resides in the clathrin-coated vesicle membrane. It localises to the golgi apparatus membrane. The protein localises to the podosome. It is found in the early endosome. Its subcellular location is the dendrite. The protein resides in the postsynaptic density. Functionally, adapter protein that binds F-actin and dynamin, and thereby plays a role in receptor-mediated endocytosis. Plays a role in the reorganization of the actin cytoskeleton, formation of cell projections, such as neurites, in neuron morphogenesis and synapse formation. Does not bind G-actin and promote actin polymerization by itself, but excerts its functions by interaction with other proteins. Required for the formation of organized podosome rosettes. The chain is Drebrin-like protein A (dbnl-a) from Xenopus laevis (African clawed frog).